The following is an 895-amino-acid chain: MASTVAGNSFVSQQHPGNLHSANLQSQSQGFRRQNSTSSVPSTASFDPPNGSIANTGSQKHHPMSSQQSQPPASQQSFSMSQTGSQPQPSQSSFRSYSDQNVPQQPQEASPIYTAVYSNVEVYEFEVNGVAVMKRIGDSKLNATQILKVAGVEKGKRTKILEKEIQTGEHEKVQGGYGKYQGTWIKYERALEVCRQYGVEELLRPLLEYNRNPDGSVSQANLNTPTKEQAMAAQRKKMYNSGADSRNNNGGGTFFKNISQTAHSAMTAISKARFDSPGPRGRNGPTRAPSFQRQLSTQSIDDFHGGNSQASNFAENFPPQDVNMAFSAGSEPQPGGLNGTEPPRKRQRMDMTPANSFGAYANNSQMQAYADAFPGSPTEPNDSFIYTQHAAANDTLLQQQHDQQTPLQPLPYEQSVEAENKRSMLMSIFMNDGMSEQARVDTLRQIHPRDLDMPIDSQCHTALHWAATLSRMTILRRLIEAGASPFRVNTSGETPLMRACIVTNSHDNDSMPAILDILGNTMEVRDSKERTVLHHIALTSAVSGRSAASRYYLQCLLGWVVRQGAANGGQLNSQTFNGGATVSQSQNATRLDLGRFMSEMLNAQDSAGDTALNIAARIGNRSIISQLLEVCASPHIANRSGLRPTDFGIGVDSDGAMKTKGDSGGDVENGDVGGSSQKSNESSNEIVTSITHLLTETSANFQEEIKNKQKNIDSLHATLRLTTTDVNDLRRKLDEAQARVKAQQLARQKVTNLQRAEERERYRLTQLEQTTGRRDIASANGWEAESNTLLATINATTNGEPDADAKLPSSALLRARIEAVKKQTESTRQSVVALKGRSREVEGRYRHLVALATKCRDEDVDSTMEGLLKAVESEKGELEIGRVRRFLGGVEGVIG.

Positions 1 to 45 (MASTVAGNSFVSQQHPGNLHSANLQSQSQGFRRQNSTSSVPSTAS) are enriched in polar residues. Residues 1–107 (MASTVAGNSF…SDQNVPQQPQ (107 aa)) form a disordered region. Over residues 64–100 (MSSQQSQPPASQQSFSMSQTGSQPQPSQSSFRSYSDQ) the composition is skewed to low complexity. The region spanning 112-219 (IYTAVYSNVE…NRNPDGSVSQ (108 aa)) is the HTH APSES-type domain. The H-T-H motif DNA-binding region spans 143–164 (ATQILKVAGVEKGKRTKILEKE). Disordered regions lie at residues 272–293 (ARFD…SFQR) and 323–358 (NMAF…NSFG). 2 ANK repeats span residues 458–488 (QCHT…PFRV) and 607–636 (AGDT…SPHI). The interval 653–684 (SDGAMKTKGDSGGDVENGDVGGSSQKSNESSN) is disordered. A compositionally biased stretch (polar residues) spans 674 to 684 (GSSQKSNESSN). Positions 698–759 (SANFQEEIKN…VTNLQRAEER (62 aa)) form a coiled coil.

It localises to the nucleus. Functionally, transcription factor that plays a role downstream of the MCK1-MKK2-MPS1 cascade. Required for hyphal morphogenesis and pathogenicity. Is an important oxidative stress response regulator and plays a positive role in the regulation of extracellular peroxidases. This is Transcription factor SWI6 from Pyricularia oryzae (strain 70-15 / ATCC MYA-4617 / FGSC 8958) (Rice blast fungus).